The sequence spans 83 residues: Alpha-elapitoxin-Ppr1 (83 aa).

The N-terminal stretch at 1-21 (MKTLLLTLVVVTIVCLDLGYT) is a signal peptide. 4 cysteine pairs are disulfide-bonded: Cys-24-Cys-45, Cys-38-Cys-62, Cys-64-Cys-75, and Cys-76-Cys-81.

This sequence belongs to the three-finger toxin family. Short-chain subfamily. Type I alpha-neurotoxin sub-subfamily. Expressed by the venom gland.

It localises to the secreted. Functionally, bird-specific neurotoxin (tested on chicken) that acts as a pseudo-irreversible antagonist at the nicotinic acetylcholine receptor (nAChR) of the skeletal neuromuscular junction. Has no significant effect on the electrically-induced twitches of the rat isolated phrenic nerve-diaphragm preparation. This Pseudechis porphyriacus (Red-bellied black snake) protein is Alpha-elapitoxin-Ppr1.